The primary structure comprises 1012 residues: Structural polyprotein (1012 aa).

Position 30 (Asp-30) interacts with a divalent metal cation. A Peptidase S50 domain is found at Ala-513–Ala-755. Catalysis depends on Ser-652, which acts as the Nucleophile. Lys-692 is an active-site residue. The tract at residues Glu-971 to Glu-1012 is disordered. Residues Arg-975–Pro-986 are compositionally biased toward basic residues. The tract at residues Ile-1003–Glu-1012 is interaction with VP1 protein.

Homotrimer. A central divalent metal stabilizes the VP2 trimer. Interacts with host ITGA4/ITGB1. In terms of assembly, homodimer. Interacts (via C-terminus) with VP1 in the cytoplasm. Interacts with VP2. In terms of processing, specific enzymatic cleavages yield mature proteins. The capsid assembly seems to be regulated by polyprotein processing. The protease VP4 cleaves itself off the polyprotein, thus releasing pre-VP2 and VP3 within the infected cell. During capsid assembly, the C-terminus of pre-VP2 is further processed by VP4, giving rise to VP2, the external capsid protein and three small peptides that all stay closely associated with the capsid.

Its subcellular location is the virion. It localises to the host cytoplasm. Its function is as follows. Capsid protein VP2 self assembles to form an icosahedral capsid with a T=13 symmetry, about 70 nm in diameter, and consisting of 260 VP2 trimers. The capsid encapsulates the genomic dsRNA. VP2 is also involved in attachment and entry into the host cell by interacting with host ITGA4/ITGB1. In terms of biological role, the precursor of VP2 plays an important role in capsid assembly. First, pre-VP2 and VP2 oligomers assemble to form a procapsid. Then, the pre-VP2 intermediates may be processed into VP2 proteins by proteolytic cleavage mediated by VP4 to obtain the mature virion. The final capsid is composed of pentamers and hexamers but VP2 has a natural tendency to assemble into all-pentameric structures. Therefore pre-VP2 may be required to allow formation of the hexameric structures. Functionally, protease VP4 is a serine protease that cleaves the polyprotein into its final products. Pre-VP2 is first partially cleaved, and may be completely processed by VP4 upon capsid maturation. Capsid protein VP3 plays a key role in virion assembly by providing a scaffold for the capsid made of VP2. May self-assemble to form a T=4-like icosahedral inner-capsid composed of at least 180 trimers. Plays a role in genomic RNA packaging by recruiting VP1 into the capsid and interacting with the dsRNA genome segments to form a ribonucleoprotein complex. Additionally, the interaction of the VP3 C-terminal tail with VP1 removes the inherent structural blockade of the polymerase active site. Thus, VP3 can also function as a transcriptional activator. Its function is as follows. Structural peptide 1 is a small peptide derived from pre-VP2 C-terminus. It destabilizes and perforates cell membranes, suggesting a role during entry. In terms of biological role, structural peptide 2 is a small peptide derived from pre-VP2 C-terminus. It is not essential for the virus viability, but viral growth is affected when missing. Functionally, structural peptide 3 is a small peptide derived from pre-VP2 C-terminus. It is not essential for the virus viability, but viral growth is affected when missing. The polypeptide is Structural polyprotein (Avian infectious bursal disease virus (isolate Chicken/UK/UK661/1989) (IBDV)).